We begin with the raw amino-acid sequence, 175 residues long: Nucleoplasmin-3 (175 aa).

An N-acetylalanine modification is found at A2. Phosphoserine is present on S16. Position 27 is an omega-N-methylarginine (R27). Phosphoserine occurs at positions 147 and 151.

Belongs to the nucleoplasmin family. Interacts with NPM (via N-terminus). Forms a pentamer with NPM at a ratio 4:1 (NPM3/NPM). Two pentamers form a decamer. In terms of processing, phosphorylated. In terms of tissue distribution, predominantly expressed in testis.

The protein localises to the nucleus. Its subcellular location is the nucleolus. Functionally, plays a role in the regulation of diverse cellular processes such as ribosome biogenesis, chromatin remodeling or protein chaperoning. Modulates the histone chaperone function and the RNA-binding activity of nucleolar phosphoprotein B23/NPM. Efficiently mediates chromatin remodeling when included in a pentamer containing NPM3 and NPM. The sequence is that of Nucleoplasmin-3 (Npm3) from Mus musculus (Mouse).